A 616-amino-acid chain; its full sequence is MRVWLVCMVGLLGGLHGSNVEESEDMKKVRKIFEKAFSRKLYDSEVERIRKLEKELCLDTRVMIPFIFHGDRVVALPTTRYQDVDKSEKKYVEKVVVQLRWLVWRLMAWVYVPGGSSWIRDLINEVFEATVSRDPDPVSLYKGARRRSGIRLMDLVMKVFKQNVSMVSEFGQRLARSAEDRIQGIPGSLSPEERKKEEEMLRKIKEHGERLCTKERQEEMVRAQEIICDVCAYVWERDEDRMSFIMEVYSRHLCLKIVMPYTDIEVPLISYIDHHKLVSTDEKYKSMNIMAEVFKQAFIEHKGIDDESINNAVREVRERKRLEEMREMEERKRREEERAKNEEELLRMVEREKREESKGRGKKKGGKRGAGEAKEESKEEDGKEEEGVEAEEEESAEVPLVETAVGGARRKKSLKGKRKGDGHHYKIHSRVLRWKRSAEKIKRELDKGSEERWKNRSIEEIKEQKKVHDIVEVSELIKSKECDRFFFRTGKYMKGGSERWKMVANGILEEGGEKKVGKVEVGLFKGERGESVVYHLMFRPTETERAGMVGGSSFGKGDDVDEIKKEESSDMSGFRYPPGVRCEMTSNGNEFRIEYRNPKNTSEVLRTLTILRIPEI.

Composition is skewed to basic and acidic residues over residues 350-359 (EREKREESKG) and 369-381 (GAGEAKEESKEED). Residues 350–427 (EREKREESKG…RKGDGHHYKI (78 aa)) form a disordered region. Residues 382 to 396 (GKEEEGVEAEEEESA) are compositionally biased toward acidic residues. A compositionally biased stretch (basic residues) spans 408-427 (ARRKKSLKGKRKGDGHHYKI).

It belongs to the UPF0329 family.

The chain is UPF0329 protein ECU02_1540 from Encephalitozoon cuniculi (strain GB-M1) (Microsporidian parasite).